Reading from the N-terminus, the 271-residue chain is MAALPINGLNVCQKLEINVPVYAGMPQPIMRQQIVADNIHGETGLDGPVFEPLTRQAESTHAVKYIIDTLMASDGDITLVPVGPLSNIAVAMRMQPAILPKIREIVLMGGAYGTGNFTPSAEFNIFADPEAARVVFTSGVPLVMMGLDLTNQTVCTPDVIARMERAGGPAGELFSDIMNFTLKTQFENYGLAGGPVHDATCIGYLINPDGIKTQDMYVEVDVNSGPCYGRTVCDELGVLGKPANTKVGITIDTDWFWGLVEECVRGYIKTH.

Residues Q185 and H197 each coordinate substrate.

The protein belongs to the IUNH family. RihB subfamily.

It catalyses the reaction a pyrimidine ribonucleoside + H2O = a pyrimidine nucleobase + D-ribose. In Shigella dysenteriae serotype 1 (strain Sd197), this protein is Putative pyrimidine-specific ribonucleoside hydrolase RihB (rihB).